We begin with the raw amino-acid sequence, 603 residues long: Translation initiation factor IF-2 (603 aa).

Residues 112 to 279 enclose the tr-type G domain; it reads TRPPIITIMG…NINLQAEILD (168 aa). Residues 121 to 128 form a G1 region; sequence GHVDHGKT. 121 to 128 serves as a coordination point for GTP; the sequence is GHVDHGKT. Residues 146 to 150 are G2; that stretch reads GITQH. The G3 stretch occupies residues 167–170; that stretch reads DTPG. Residues 167–171 and 221–224 contribute to the GTP site; these read DTPGH and NKMD. The tract at residues 221-224 is G4; sequence NKMD. Positions 257-259 are G5; that stretch reads SAL.

The protein belongs to the TRAFAC class translation factor GTPase superfamily. Classic translation factor GTPase family. IF-2 subfamily.

It localises to the cytoplasm. In terms of biological role, one of the essential components for the initiation of protein synthesis. Protects formylmethionyl-tRNA from spontaneous hydrolysis and promotes its binding to the 30S ribosomal subunits. Also involved in the hydrolysis of GTP during the formation of the 70S ribosomal complex. The protein is Translation initiation factor IF-2 of Mycoplasmopsis pulmonis (strain UAB CTIP) (Mycoplasma pulmonis).